Consider the following 118-residue polypeptide: Ribonuclease P protein component 4 (118 aa).

Cys-59, Cys-62, Cys-85, and Cys-88 together coordinate Zn(2+).

It belongs to the eukaryotic/archaeal RNase P protein component 4 family. As to quaternary structure, consists of a catalytic RNA component and at least 4-5 protein subunits. Zn(2+) is required as a cofactor.

It is found in the cytoplasm. It catalyses the reaction Endonucleolytic cleavage of RNA, removing 5'-extranucleotides from tRNA precursor.. Functionally, part of ribonuclease P, a protein complex that generates mature tRNA molecules by cleaving their 5'-ends. The chain is Ribonuclease P protein component 4 from Sulfolobus acidocaldarius (strain ATCC 33909 / DSM 639 / JCM 8929 / NBRC 15157 / NCIMB 11770).